The primary structure comprises 164 residues: Nitric oxide synthase, inducible (164 aa).

Position 3 (F3) interacts with (6R)-L-erythro-5,6,7,8-tetrahydrobiopterin. Y18 provides a ligand contact to heme b. Residues 42-62 (FKGLIRAVLFSQTLIKSALAK) are calmodulin-binding. One can recognise a Flavodoxin-like domain in the interval 66–164 (CTVLYATETG…SRMYPHFCAF (99 aa)). FMN-binding residues include T72, E73, T74, K76, S77, S118, T119, S155, and C162.

This sequence belongs to the NOS family. Homodimer. Requires heme b as cofactor. FAD is required as a cofactor. FMN serves as cofactor. The cofactor is (6R)-L-erythro-5,6,7,8-tetrahydrobiopterin.

The protein localises to the cytoplasm. It is found in the cytosol. The catalysed reaction is 2 L-arginine + 3 NADPH + 4 O2 + H(+) = 2 L-citrulline + 2 nitric oxide + 3 NADP(+) + 4 H2O. Its activity is regulated as follows. Not stimulated by calcium/calmodulin. In terms of biological role, produces nitric oxide (NO) which is a messenger molecule with diverse functions throughout the body. In macrophages, NO mediates tumoricidal and bactericidal actions. Also has nitrosylase activity and mediates cysteine S-nitrosylation of cytoplasmic target proteins such COX2. This chain is Nitric oxide synthase, inducible (nos2), found in Carassius auratus (Goldfish).